Reading from the N-terminus, the 294-residue chain is Acetylglutamate kinase (294 aa).

Substrate contacts are provided by residues G64–G65, R86, and N189.

This sequence belongs to the acetylglutamate kinase family. ArgB subfamily.

Its subcellular location is the cytoplasm. The catalysed reaction is N-acetyl-L-glutamate + ATP = N-acetyl-L-glutamyl 5-phosphate + ADP. Its pathway is amino-acid biosynthesis; L-arginine biosynthesis; N(2)-acetyl-L-ornithine from L-glutamate: step 2/4. In terms of biological role, catalyzes the ATP-dependent phosphorylation of N-acetyl-L-glutamate. This Carboxydothermus hydrogenoformans (strain ATCC BAA-161 / DSM 6008 / Z-2901) protein is Acetylglutamate kinase.